The following is a 157-amino-acid chain: Small ribosomal subunit protein uS7 (157 aa).

This sequence belongs to the universal ribosomal protein uS7 family. In terms of assembly, part of the 30S ribosomal subunit. Contacts proteins S9 and S11.

Its function is as follows. One of the primary rRNA binding proteins, it binds directly to 16S rRNA where it nucleates assembly of the head domain of the 30S subunit. Is located at the subunit interface close to the decoding center, probably blocks exit of the E-site tRNA. The chain is Small ribosomal subunit protein uS7 from Bdellovibrio bacteriovorus (strain ATCC 15356 / DSM 50701 / NCIMB 9529 / HD100).